Reading from the N-terminus, the 491-residue chain is Tyrosine 3-monooxygenase (491 aa).

Residue Ser-19 is modified to Phosphoserine; by CaMK2. Ser-31 carries the phosphoserine modification. Ser-40 carries the phosphoserine; by CaMK2 and PKA modification. His-324, His-329, and Glu-369 together coordinate Fe cation. Ser-465 is modified (phosphoserine).

The protein belongs to the biopterin-dependent aromatic amino acid hydroxylase family. In terms of assembly, homotetramer. Interacts (when phosphorylated at Ser-19) with YWHAG; one YWHAG dimer bounds to one TH tetramer and this interaction may influence the phosphorylation and dephosphorylation of other sites. Interacts with NT5DC2; the interaction results in reduced phosphorylation and decreased catalytic activity of TH. It depends on Fe(2+) as a cofactor. In terms of processing, phosphorylated on Ser-19, Ser-31 and Ser-40 by several protein kinases with different site specificities. Phosphorylation at Ser-31 and Ser-40 leads to an increase of TH activity. Phosphorylation at Ser-40 activates the enzyme and also counteracts the feedback inhibition of TH by catecholamines. Phosphorylation of Ser-19 and Ser-31 triggers the proteasomal degradation of TH through the ubiquitin-proteasome pathway. Phosphorylation at Ser-31 facilitates transport of TH from the soma to the nerve terminals via the microtubule network. Phosphorylation at Ser-19 induces the high-affinity binding to the 14-3-3 protein YWHAG; this interaction may influence the phosphorylation and dephosphorylation of other sites. Ser-19 increases the phosphorylation at Ser-40 in a hierarchical manner, leading to increased activity.

Its subcellular location is the cytoplasm. It is found in the perinuclear region. The protein resides in the nucleus. It localises to the cell projection. The protein localises to the axon. Its subcellular location is the cytoplasmic vesicle. It is found in the secretory vesicle. The protein resides in the synaptic vesicle. It carries out the reaction (6R)-L-erythro-5,6,7,8-tetrahydrobiopterin + L-tyrosine + O2 = (4aS,6R)-4a-hydroxy-L-erythro-5,6,7,8-tetrahydrobiopterin + L-dopa. The protein operates within catecholamine biosynthesis; dopamine biosynthesis; dopamine from L-tyrosine: step 1/2. With respect to regulation, inhibited in feedback fashion by the catecholamine neurotransmitters, especially by dopamine in competition with tetrahydrobiopterin. Phosphorylation of several Ser/Thr residues in the N-terminus regulates the catalytic activity. Ser-31 and Ser-40 are readily phosphorylated to activate the catalytic activity. A Cysteine modification induced by N-ethylmaleimide (NEM), inhibits tyrosine 3-monooxygenase activity through the modification of the Cys-170. Functionally, catalyzes the conversion of L-tyrosine to L-dihydroxyphenylalanine (L-Dopa), the rate-limiting step in the biosynthesis of catecholamines, dopamine, noradrenaline, and adrenaline. Uses tetrahydrobiopterin and molecular oxygen to convert tyrosine to L-Dopa. In addition to tyrosine, is able to catalyze the hydroxylation of phenylalanine and tryptophan with lower specificity. Positively regulates the regression of retinal hyaloid vessels during postnatal development. This Bos taurus (Bovine) protein is Tyrosine 3-monooxygenase (TH).